The following is a 250-amino-acid chain: NAD(P)H-quinone oxidoreductase subunit K, chloroplastic (250 aa).

[4Fe-4S] cluster-binding residues include Cys67, Cys68, Cys132, and Cys163.

Belongs to the complex I 20 kDa subunit family. As to quaternary structure, NDH is composed of at least 16 different subunits, 5 of which are encoded in the nucleus. [4Fe-4S] cluster serves as cofactor.

It localises to the plastid. The protein resides in the chloroplast thylakoid membrane. The enzyme catalyses a plastoquinone + NADH + (n+1) H(+)(in) = a plastoquinol + NAD(+) + n H(+)(out). The catalysed reaction is a plastoquinone + NADPH + (n+1) H(+)(in) = a plastoquinol + NADP(+) + n H(+)(out). Its function is as follows. NDH shuttles electrons from NAD(P)H:plastoquinone, via FMN and iron-sulfur (Fe-S) centers, to quinones in the photosynthetic chain and possibly in a chloroplast respiratory chain. The immediate electron acceptor for the enzyme in this species is believed to be plastoquinone. Couples the redox reaction to proton translocation, and thus conserves the redox energy in a proton gradient. The chain is NAD(P)H-quinone oxidoreductase subunit K, chloroplastic from Adiantum capillus-veneris (Maidenhair fern).